We begin with the raw amino-acid sequence, 252 residues long: uncharacterized protein (252 aa).

16–40 (LVTGASDGIGREAAMTYARYGATVI) contributes to the NADP(+) binding site. Serine 152 contributes to the substrate binding site. Tyrosine 165 (proton acceptor) is an active-site residue.

The protein belongs to the short-chain dehydrogenases/reductases (SDR) family.

This is an uncharacterized protein from Escherichia coli (strain K12).